Consider the following 754-residue polypeptide: Probable beta-glucosidase D (754 aa).

Residues 1 to 20 (MKVLSFIVAAALLGLTGASS) form the signal peptide. N-linked (GlcNAc...) asparagine glycans are attached at residues N66, N69, and N186. The disordered stretch occupies residues 186–206 (NRTGGGGGGGGDSGSAPYSSN). Positions 188-198 (TGGGGGGGGDS) are enriched in gly residues. N239 carries an N-linked (GlcNAc...) asparagine glycan. D267 is an active-site residue. N-linked (GlcNAc...) asparagine glycans are attached at residues N301, N345, N443, N512, N534, N573, N588, N655, and N745.

The protein belongs to the glycosyl hydrolase 3 family.

It localises to the secreted. The catalysed reaction is Hydrolysis of terminal, non-reducing beta-D-glucosyl residues with release of beta-D-glucose.. It functions in the pathway glycan metabolism; cellulose degradation. Its function is as follows. Beta-glucosidases are one of a number of cellulolytic enzymes involved in the degradation of cellulosic biomass. Catalyzes the last step releasing glucose from the inhibitory cellobiose. The polypeptide is Probable beta-glucosidase D (bglD) (Aspergillus niger (strain ATCC MYA-4892 / CBS 513.88 / FGSC A1513)).